Reading from the N-terminus, the 949-residue chain is RNA polymerase-associated protein RapA (949 aa).

The region spanning 164-332 (EVADRIAPRV…FARLRLLDPN (169 aa)) is the Helicase ATP-binding domain. Residue 177-184 (DEVGLGKT) participates in ATP binding. Residues 278 to 281 (DEAH) carry the DEAH box motif. The Helicase C-terminal domain maps to 474–628 (RVEWLIDTLK…TCPTGNALQH (155 aa)).

Belongs to the SNF2/RAD54 helicase family. RapA subfamily. Interacts with the RNAP. Has a higher affinity for the core RNAP than for the holoenzyme. Its ATPase activity is stimulated by binding to RNAP.

Functionally, transcription regulator that activates transcription by stimulating RNA polymerase (RNAP) recycling in case of stress conditions such as supercoiled DNA or high salt concentrations. Probably acts by releasing the RNAP, when it is trapped or immobilized on tightly supercoiled DNA. Does not activate transcription on linear DNA. Probably not involved in DNA repair. The protein is RNA polymerase-associated protein RapA of Stutzerimonas stutzeri (strain A1501) (Pseudomonas stutzeri).